A 131-amino-acid chain; its full sequence is MNPTIYLSCLMVFSVFLLGKVNAENEDEFVTEKQRLFSVYGDSSVDEATKYRNIDSLVTFYDKYFTRLQLKPDLNTRAHDLLRRYKEENARVVLVDGTPAQGGFWLPLVKLLIVQLGVEIASEGVKRAIES.

The signal sequence occupies residues 1–23 (MNPTIYLSCLMVFSVFLLGKVNA).

This sequence belongs to the Turandot family.

It is found in the secreted. In terms of biological role, a humoral factor that may play a role in stress tolerance. Requires Mekk1 expression in the fat body to regulate response to septic injury and consequent immune response. This is Protein Turandot M from Drosophila melanogaster (Fruit fly).